A 217-amino-acid chain; its full sequence is Probable cutinase 3 (217 aa).

An N-terminal signal peptide occupies residues 1 to 17 (MSLRSLFVAGLATLALA). Disulfide bonds link Cys39/Cys118 and Cys65/Cys79. Ser129 (nucleophile) is an active-site residue. A disulfide bond links Cys180 and Cys187. Asp184 is an active-site residue. His197 functions as the Proton donor/acceptor in the catalytic mechanism.

The protein belongs to the cutinase family.

The protein localises to the secreted. It carries out the reaction cutin + H2O = cutin monomers.. Functionally, catalyzes the hydrolysis of complex carboxylic polyesters found in the cell wall of plants. Degrades cutin, a macromolecule that forms the structure of the plant cuticle. This is Probable cutinase 3 from Neosartorya fischeri (strain ATCC 1020 / DSM 3700 / CBS 544.65 / FGSC A1164 / JCM 1740 / NRRL 181 / WB 181) (Aspergillus fischerianus).